Reading from the N-terminus, the 179-residue chain is Protein GrpE (179 aa).

Residues 1-20 (MSEETKEEIKNEKVDEEVTE) form a disordered region.

The protein belongs to the GrpE family. As to quaternary structure, homodimer.

It is found in the cytoplasm. Its function is as follows. Participates actively in the response to hyperosmotic and heat shock by preventing the aggregation of stress-denatured proteins, in association with DnaK and GrpE. It is the nucleotide exchange factor for DnaK and may function as a thermosensor. Unfolded proteins bind initially to DnaJ; upon interaction with the DnaJ-bound protein, DnaK hydrolyzes its bound ATP, resulting in the formation of a stable complex. GrpE releases ADP from DnaK; ATP binding to DnaK triggers the release of the substrate protein, thus completing the reaction cycle. Several rounds of ATP-dependent interactions between DnaJ, DnaK and GrpE are required for fully efficient folding. This Lactococcus lactis subsp. lactis (strain IL1403) (Streptococcus lactis) protein is Protein GrpE.